A 439-amino-acid chain; its full sequence is uncharacterized protein (439 aa).

An N-terminal signal peptide occupies residues 1–22; the sequence is MWVALKRFGFLSGLLALTVLSA. The N-palmitoyl cysteine moiety is linked to residue cysteine 23. Cysteine 23 carries the S-diacylglycerol cysteine lipid modification.

This sequence belongs to the MG067/MG068/MG395 family.

Its subcellular location is the cell membrane. This is an uncharacterized protein from Mycoplasma pneumoniae (strain ATCC 29342 / M129 / Subtype 1) (Mycoplasmoides pneumoniae).